The sequence spans 155 residues: NADPH-dependent 7-cyano-7-deazaguanine reductase (155 aa).

Catalysis depends on Cys-53, which acts as the Thioimide intermediate. The Proton donor role is filled by Asp-60. Substrate is bound by residues 75-77 (VES) and 94-95 (HE).

The protein belongs to the GTP cyclohydrolase I family. QueF type 1 subfamily.

The protein resides in the cytoplasm. It carries out the reaction 7-aminomethyl-7-carbaguanine + 2 NADP(+) = 7-cyano-7-deazaguanine + 2 NADPH + 3 H(+). It functions in the pathway tRNA modification; tRNA-queuosine biosynthesis. In terms of biological role, catalyzes the NADPH-dependent reduction of 7-cyano-7-deazaguanine (preQ0) to 7-aminomethyl-7-deazaguanine (preQ1). This chain is NADPH-dependent 7-cyano-7-deazaguanine reductase, found in Brucella suis (strain ATCC 23445 / NCTC 10510).